Consider the following 1256-residue polypeptide: Muramidase-released protein (1256 aa).

The N-terminal stretch at 1–47 (MRRSNKKSFDWYGTKQQFSIRKYHFGAASVLLGVSLVLGAGAQVVKA) is a signal peptide. 2 Small repeats span residues 663 to 681 (KTTG…VYEK) and 839 to 861 (KTDG…VYQK). Disordered stretches follow at residues 873–949 (PETD…VDTP), 967–994 (GNPI…KTVT), and 1028–1049 (KEPV…TDNK). One copy of the Large repeat lies at 953–1006 (VPVKKVVTNHVDEEGNPIAPQEEGTKPNKSIPGYEFTGKTVTDEDGNTTHIYKK). Polar residues predominate over residues 1033–1045 (DTPTSPEGTPYDT). A Small repeat occupies 1064–1084 (RVDGTENGKVVEGETVVTYVY). Large repeat units follow at residues 1089–1142 (TPAK…IYKK) and 1143–1195 (TPAK…IYRK). Residues 1102-1137 (EGNPVAPQEEGTKPNKSIPGYEFTGKTVTDEDGNTT) form a disordered region. A disordered region spans residues 1196-1229 (LSNKPTTPEKETPAKPQAGKTASGKAQLPNTGEA). An LPXTG sorting signal motif is present at residues 1223–1227 (LPNTG). A Pentaglycyl murein peptidoglycan amidated threonine modification is found at threonine 1226. Residues 1227–1256 (GEASSVAGALGTAMLVATLAFARKRRRNED) constitute a propeptide, removed by sortase.

The protein resides in the secreted. The protein localises to the cell wall. The chain is Muramidase-released protein (mrp) from Streptococcus suis.